The following is a 217-amino-acid chain: Probable transaldolase (217 aa).

Lys83 (schiff-base intermediate with substrate) is an active-site residue.

The protein belongs to the transaldolase family. Type 3B subfamily.

Its subcellular location is the cytoplasm. It catalyses the reaction D-sedoheptulose 7-phosphate + D-glyceraldehyde 3-phosphate = D-erythrose 4-phosphate + beta-D-fructose 6-phosphate. Its pathway is carbohydrate degradation; pentose phosphate pathway; D-glyceraldehyde 3-phosphate and beta-D-fructose 6-phosphate from D-ribose 5-phosphate and D-xylulose 5-phosphate (non-oxidative stage): step 2/3. Its function is as follows. Transaldolase is important for the balance of metabolites in the pentose-phosphate pathway. The protein is Probable transaldolase of Roseobacter denitrificans (strain ATCC 33942 / OCh 114) (Erythrobacter sp. (strain OCh 114)).